We begin with the raw amino-acid sequence, 37 residues long: Large ribosomal subunit protein bL36 (37 aa).

Belongs to the bacterial ribosomal protein bL36 family.

This Sulfurihydrogenibium sp. (strain YO3AOP1) protein is Large ribosomal subunit protein bL36.